A 107-amino-acid chain; its full sequence is Phosphoribosyl-ATP pyrophosphatase (107 aa).

This sequence belongs to the PRA-PH family.

The protein resides in the cytoplasm. The catalysed reaction is 1-(5-phospho-beta-D-ribosyl)-ATP + H2O = 1-(5-phospho-beta-D-ribosyl)-5'-AMP + diphosphate + H(+). It participates in amino-acid biosynthesis; L-histidine biosynthesis; L-histidine from 5-phospho-alpha-D-ribose 1-diphosphate: step 2/9. In Agrobacterium fabrum (strain C58 / ATCC 33970) (Agrobacterium tumefaciens (strain C58)), this protein is Phosphoribosyl-ATP pyrophosphatase (hisE).